A 209-amino-acid chain; its full sequence is Small ribosomal subunit protein uS4 (209 aa).

The S4 RNA-binding domain maps to 99–164; sequence TRLDNVVYRM…IPRVQELKEL (66 aa).

This sequence belongs to the universal ribosomal protein uS4 family. As to quaternary structure, part of the 30S ribosomal subunit. Contacts protein S5. The interaction surface between S4 and S5 is involved in control of translational fidelity.

Functionally, one of the primary rRNA binding proteins, it binds directly to 16S rRNA where it nucleates assembly of the body of the 30S subunit. With S5 and S12 plays an important role in translational accuracy. The sequence is that of Small ribosomal subunit protein uS4 from Natranaerobius thermophilus (strain ATCC BAA-1301 / DSM 18059 / JW/NM-WN-LF).